The chain runs to 278 residues: 4-diphosphocytidyl-2-C-methyl-D-erythritol kinase (278 aa).

K9 is a catalytic residue. Residue 93-103 (PLGGGLGGGSS) participates in ATP binding. D135 is a catalytic residue.

Belongs to the GHMP kinase family. IspE subfamily.

It catalyses the reaction 4-CDP-2-C-methyl-D-erythritol + ATP = 4-CDP-2-C-methyl-D-erythritol 2-phosphate + ADP + H(+). It participates in isoprenoid biosynthesis; isopentenyl diphosphate biosynthesis via DXP pathway; isopentenyl diphosphate from 1-deoxy-D-xylulose 5-phosphate: step 3/6. In terms of biological role, catalyzes the phosphorylation of the position 2 hydroxy group of 4-diphosphocytidyl-2C-methyl-D-erythritol. This is 4-diphosphocytidyl-2-C-methyl-D-erythritol kinase from Nitrosomonas europaea (strain ATCC 19718 / CIP 103999 / KCTC 2705 / NBRC 14298).